The primary structure comprises 328 residues: Renalase (328 aa).

FAD-binding positions include alanine 13, 32–33 (DK), arginine 40, and 56–57 (QY). Substrate-binding positions include 57–61 (YFTAR) and 96–98 (SPD). Isoleucine 128 contacts FAD. Threonine 185 is a substrate binding site. Aspartate 302 contacts FAD. Arginine 308 provides a ligand contact to substrate. Position 309 (valine 309) interacts with FAD.

The protein belongs to the bacterial renalase family. It depends on FAD as a cofactor.

It carries out the reaction 1,2-dihydro-beta-NAD + O2 + H(+) = H2O2 + NAD(+). The catalysed reaction is 1,2-dihydro-beta-NADP + O2 + H(+) = H2O2 + NADP(+). It catalyses the reaction 1,6-dihydro-beta-NADP + O2 + H(+) = H2O2 + NADP(+). The enzyme catalyses 1,6-dihydro-beta-NAD + O2 + H(+) = H2O2 + NAD(+). Catalyzes the oxidation of the 1,2-dihydro- and 1,6-dihydro- isomeric forms of beta-NAD(P) back to beta-NAD(P)+. Has a preference for 1,2-dihydro-beta-NAD as substrate. May serve to protect primary metabolism dehydrogenases from inhibition by the 1,2-dihydro- and 1,6-dihydro-beta-NAD(P) isomers. The polypeptide is Renalase (Pseudomonas savastanoi pv. phaseolicola (strain 1448A / Race 6) (Pseudomonas syringae pv. phaseolicola (strain 1448A / Race 6))).